A 72-amino-acid chain; its full sequence is Movement protein TGBp3 (72 aa).

At 1 to 2 the chain is on the lumenal side; it reads MS. A helical transmembrane segment spans residues 3-23; the sequence is LSFSLIVFAVGVAVSIGVLTL. The Cytoplasmic portion of the chain corresponds to 24-72; that stretch reads TTQQSSSYCLILVDGAKAVVEGCHLRQDIPAILSELKPASSPFNPLFCS.

It belongs to the Tymovirales TGBp3 protein family.

It localises to the host endoplasmic reticulum membrane. Plays a role in viral cell-to-cell propagation, by facilitating genome transport to neighboring plant cells through plasmosdesmata. May induce the formation of granular vesicles derived from the Endoplasmic reticulum, which align on actin filaments. This chain is Movement protein TGBp3 (ORF4), found in Lolium latent virus (isolate Lolium/USA/US1/-) (LoLV).